Here is a 113-residue protein sequence, read N- to C-terminus: Nitrogenase vanadium-iron protein delta chain (113 aa).

In terms of assembly, hexamer of two alpha, two beta, and two delta chains. It depends on iron-sulfur cluster as a cofactor. Vanadium cation is required as a cofactor.

It catalyses the reaction N2 + 8 reduced [2Fe-2S]-[ferredoxin] + 16 ATP + 16 H2O = H2 + 8 oxidized [2Fe-2S]-[ferredoxin] + 2 NH4(+) + 16 ADP + 16 phosphate + 6 H(+). In terms of biological role, the key enzymatic reactions in nitrogen fixation are catalyzed by the nitrogenase complex, which has 2 components: the iron protein (component 2) and a component 1 which is either a molybdenum-iron protein, a vanadium-iron, or an iron-iron protein. This Azotobacter salinestris protein is Nitrogenase vanadium-iron protein delta chain (vnfG).